The sequence spans 500 residues: ATP synthase subunit alpha (500 aa).

169–176 lines the ATP pocket; it reads GDRQTGKT.

It belongs to the ATPase alpha/beta chains family. F-type ATPases have 2 components, CF(1) - the catalytic core - and CF(0) - the membrane proton channel. CF(1) has five subunits: alpha(3), beta(3), gamma(1), delta(1), epsilon(1). CF(0) has three main subunits: a(1), b(2) and c(9-12). The alpha and beta chains form an alternating ring which encloses part of the gamma chain. CF(1) is attached to CF(0) by a central stalk formed by the gamma and epsilon chains, while a peripheral stalk is formed by the delta and b chains.

It localises to the cell membrane. It carries out the reaction ATP + H2O + 4 H(+)(in) = ADP + phosphate + 5 H(+)(out). Functionally, produces ATP from ADP in the presence of a proton gradient across the membrane. The alpha chain is a regulatory subunit. The sequence is that of ATP synthase subunit alpha from Lactococcus lactis subsp. cremoris (strain MG1363).